Reading from the N-terminus, the 449-residue chain is MDPTRGDSRYNLNYSMSSIGLSLADPADMYGNPALGAGRPPSGGLLQNMGGVPPMQRPNPAAGAPPAPQCQTLHSPQHASQQQQQQQQQQQQHQQQQQQQQQHPQQQRGLKRSGSDCYEDHHRSSGGLTLQGLDNVASGAVDDSVDNYNPLPNKKSPPANGKKTKGRVKIKMEYIDNKLRRYTTFSKRKTGIMKKAYELSTLTGTQVMLLVASETGHVYTFATRKLQPMITSEAGKQLIQTCLNSPDPPSVGGGDQRMSATGFEETELSYNIADEDSKDDRSPTSSGNESDDSSDVEMPAEAAEVATKLPASKTEVSAPPAASCSAATASSGHKTMPALNYQTDTNSGPSTSTAAGGGGSADSKYVYSAASIANIPQKMLRQLIQSGHLQVHAEEDGNQYVTIPLSSTAANLIKSNKLTASGSGASGSGTPVKNDASADKPLTIKQEFD.

Residues Leu23 to Gly166 form a disordered region. The segment covering Gln69–Ser80 has biased composition (polar residues). A compositionally biased stretch (low complexity) spans Gln81 to Gln107. Ser156 bears the Phosphoserine mark. One can recognise an MADS-box domain in the interval Arg167 to Lys225. Disordered regions lie at residues Tyr270–Ser360 and Leu418–Asp449. Low complexity-rich tracts occupy residues Ser317–Ser331 and Thr345–Ala354.

After germ band retraction, high levels of zygotic expression are observed in a distinct subset of peripheral tracheal cells distributed throughout the embryo and low levels in somatic muscle. Expressed in the future intervein tissue of the wing imaginal disk from the third instar larvae until eclosion of the adult fly (at protein level).

It is found in the nucleus. In terms of biological role, required for the formation of intervein tissue of the wing. Acts in a dosage-dependent manner to suppress wing vein formation and promote development of intervein cells. Might play a role in the proper formation and maintenance of the trachea. The polypeptide is Serum response factor homolog (bs) (Drosophila melanogaster (Fruit fly)).